We begin with the raw amino-acid sequence, 347 residues long: Probable E3 ubiquitin-protein ligase DTX3 (347 aa).

Residues 113-157 (EHPEMHRAGPPPLRAAPLLPPGARGLPPPPPPLPPPLPPRLREEA) form a disordered region. Residues 121-151 (GPPPLRAAPLLPPGARGLPPPPPPLPPPLPP) are compositionally biased toward pro residues. The RING-type zinc-finger motif lies at 164–205 (CPICLGEIQNAKTLEKCRHSFCEGCITRALQVKKACPMCGRF).

This sequence belongs to the Deltex family. In terms of assembly, homodimer. May form a heterodimers with other members of the Deltex family. Interacts with NOTCH1.

It is found in the cytoplasm. The enzyme catalyses S-ubiquitinyl-[E2 ubiquitin-conjugating enzyme]-L-cysteine + [acceptor protein]-L-lysine = [E2 ubiquitin-conjugating enzyme]-L-cysteine + N(6)-ubiquitinyl-[acceptor protein]-L-lysine.. The protein operates within protein modification; protein ubiquitination. Regulator of Notch signaling, a signaling pathway involved in cell-cell communications that regulates a broad spectrum of cell-fate determinations. Probably acts both as a positive and negative regulator of Notch, depending on the developmental and cell context. Functions as an ubiquitin ligase protein in vitro, suggesting that it may regulate the Notch pathway via some ubiquitin ligase activity. This chain is Probable E3 ubiquitin-protein ligase DTX3 (DTX3), found in Homo sapiens (Human).